The following is a 105-amino-acid chain: uncharacterized protein (105 aa).

The protein belongs to the asfivirus C122R family.

Its subcellular location is the virion. This is an uncharacterized protein from African swine fever virus (strain Badajoz 1971 Vero-adapted) (Ba71V).